A 64-amino-acid chain; its full sequence is Small ribosomal subunit protein bS21 (64 aa).

The disordered stretch occupies residues 26-64; the sequence is DGILSEARRRTRFERPPTRRKRKDAAKRRLAIKAARKAT. A compositionally biased stretch (basic residues) spans 43–64; it reads TRRKRKDAAKRRLAIKAARKAT.

Belongs to the bacterial ribosomal protein bS21 family.

This is Small ribosomal subunit protein bS21 from Dehalococcoides mccartyi (strain ATCC BAA-2100 / JCM 16839 / KCTC 5957 / BAV1).